The sequence spans 70 residues: Large ribosomal subunit protein bL32c (70 aa).

Disordered regions lie at residues 1 to 20 and 51 to 70; these read MAVP…KNVR and NDDS…LDDP. A compositionally biased stretch (polar residues) spans 52–61; the sequence is DDSSGSSESK.

This sequence belongs to the bacterial ribosomal protein bL32 family.

The protein resides in the plastid. It localises to the chloroplast. This chain is Large ribosomal subunit protein bL32c (rpl32), found in Pinus thunbergii (Japanese black pine).